Consider the following 189-residue polypeptide: Segregation and condensation protein B (189 aa).

The protein belongs to the ScpB family. As to quaternary structure, homodimer. Homodimerization may be required to stabilize the binding of ScpA to the Smc head domains. Component of a cohesin-like complex composed of ScpA, ScpB and the Smc homodimer, in which ScpA and ScpB bind to the head domain of Smc. The presence of the three proteins is required for the association of the complex with DNA.

It localises to the cytoplasm. Functionally, participates in chromosomal partition during cell division. May act via the formation of a condensin-like complex containing Smc and ScpA that pull DNA away from mid-cell into both cell halves. In Streptococcus pneumoniae serotype 19F (strain G54), this protein is Segregation and condensation protein B.